The chain runs to 226 residues: UPF0758 protein M28_Spy0816 (226 aa).

The region spanning 103 to 225 (SVLTSVQVAE…YYSFREKSTL (123 aa)) is the MPN domain. Zn(2+) is bound by residues His174, His176, and Asp187. A JAMM motif motif is present at residues 174–187 (HNHPSGNIEPSSND).

It belongs to the UPF0758 family.

The polypeptide is UPF0758 protein M28_Spy0816 (Streptococcus pyogenes serotype M28 (strain MGAS6180)).